A 580-amino-acid polypeptide reads, in one-letter code: Putative ankyrin repeat protein L63 (580 aa).

ANK repeat units lie at residues 81 to 110, 111 to 140, 141 to 170, 172 to 200, 202 to 230, 314 to 339, 340 to 369, 370 to 399, 400 to 429, 431 to 459, 461 to 489, 490 to 519, 521 to 549, and 551 to 579; these read SLNR…DFRI, DNDY…NIGA, NDNC…DINA, NNYP…DIRA, DDYV…VLNK, SLDD…LLGA, SERK…NIKC, GSNC…DINS, GNNY…NIRA, NDRA…NIRA, DDRA…DIKA, GDDY…NIKA, DDYA…DIRA, and NNYA…VINP.

This Acanthamoeba polyphaga (Amoeba) protein is Putative ankyrin repeat protein L63.